The sequence spans 493 residues: WAS/WASL-interacting protein family member 1 (493 aa).

Residues 1–14 (MPVPPPPAPPPPPT) are compositionally biased toward pro residues. Positions 1–493 (MPVPPPPAPP…GAPPLPPIPR (493 aa)) are disordered. Over residues 21-31 (EKPTLNKTEQA) the composition is skewed to polar residues. In terms of domain architecture, WH2 spans 32–49 (GRNALLSDISKGKKLKKT). An Asymmetric dimethylarginine modification is found at R33. A binds actin region spans residues 45–48 (KLKK). Over residues 67-105 (ASAGGYGGGGGGGGGGGGGGGGSGGNFGGGGPPGLGGLF) the composition is skewed to gly residues. Omega-N-methylarginine occurs at positions 126 and 135. Composition is skewed to pro residues over residues 142–155 (FSPP…PAPS), 162–175 (PPEP…PPRP), and 183–195 (SLPP…PRPV). Position 143 is a phosphoserine (S143). S227 carries the phosphoserine modification. Composition is skewed to pro residues over residues 239 to 248 (FPRPPLPPTP), 274 to 290 (VPPP…PSTP), and 298 to 315 (APPP…PLPP). Phosphoserine is present on residues S330 and S340. A compositionally biased stretch (pro residues) spans 336–361 (PPLPSPGRSGPLPPPPSERPPPPVRD). XRSGPXPPXP motif repeat units lie at residues 342 to 351 (GRSGPLPPPP), 364 to 373 (GRSGPLPPPP), and 400 to 409 (PRSGPRPPLP). Positions 403–424 (GPRPPLPPDRPGAGAPPPPPPS) are enriched in pro residues. Polar residues predominate over residues 425–434 (TSVRNGFQDS). Over residues 470 to 484 (ARNESRSGSNRRERG) the composition is skewed to basic and acidic residues.

Belongs to the verprolin family. In terms of assembly, binds to WAS within the N-terminal region, at a site distinct from the CDC42-binding site. Binds profilin and actin. Binds to WASL. Interacts with DBNL. Interacts with DBNL. Interacts with FNBP1L (via the SH3 domain).

The protein resides in the cytoplasmic vesicle. The protein localises to the cytoplasm. Its subcellular location is the cytoskeleton. It is found in the cell projection. It localises to the ruffle. Plays a role in the reorganization of the actin cytoskeleton. Contributes with NCK1 and GRB2 in the recruitment and activation of WASL. May participate in regulating the subcellular localization of WASL, resulting in the disassembly of stress fibers in favor of filopodia formation. Plays a role in the formation of cell ruffles. This Mus musculus (Mouse) protein is WAS/WASL-interacting protein family member 1 (Wipf1).